The primary structure comprises 521 residues: Acidic amino acid decarboxylase GADL1 (521 aa).

Residue K333 is modified to N6-(pyridoxal phosphate)lysine.

Belongs to the group II decarboxylase family. In terms of assembly, homodimer. Pyridoxal 5'-phosphate is required as a cofactor. As to expression, expressed very weakly in neurons and not detected in astrocytes, brain or liver.

The enzyme catalyses L-aspartate + H(+) = beta-alanine + CO2. It catalyses the reaction 3-sulfino-L-alanine + H(+) = hypotaurine + CO2. The catalysed reaction is L-cysteate + H(+) = taurine + CO2. Functionally, may catalyze the decarboxylation of L-aspartate, 3-sulfino-L-alanine (cysteine sulfinic acid), and L-cysteate to beta-alanine, hypotaurine and taurine, respectively. Does not exhibit any decarboxylation activity toward glutamate. The polypeptide is Acidic amino acid decarboxylase GADL1 (GADL1) (Homo sapiens (Human)).